We begin with the raw amino-acid sequence, 135 residues long: Aspartate 1-decarboxylase (135 aa).

Residue Ser-25 is the Schiff-base intermediate with substrate; via pyruvic acid of the active site. The residue at position 25 (Ser-25) is a Pyruvic acid (Ser). Thr-57 lines the substrate pocket. Tyr-58 acts as the Proton donor in catalysis. 73 to 75 provides a ligand contact to substrate; sequence GAA.

Belongs to the PanD family. In terms of assembly, heterooctamer of four alpha and four beta subunits. Requires pyruvate as cofactor. Is synthesized initially as an inactive proenzyme, which is activated by self-cleavage at a specific serine bond to produce a beta-subunit with a hydroxyl group at its C-terminus and an alpha-subunit with a pyruvoyl group at its N-terminus.

Its subcellular location is the cytoplasm. The enzyme catalyses L-aspartate + H(+) = beta-alanine + CO2. The protein operates within cofactor biosynthesis; (R)-pantothenate biosynthesis; beta-alanine from L-aspartate: step 1/1. In terms of biological role, catalyzes the pyruvoyl-dependent decarboxylation of aspartate to produce beta-alanine. The chain is Aspartate 1-decarboxylase from Mycobacterium sp. (strain JLS).